Reading from the N-terminus, the 213-residue chain is ATP phosphoribosyltransferase (213 aa).

This sequence belongs to the ATP phosphoribosyltransferase family. Short subfamily. In terms of assembly, heteromultimer composed of HisG and HisZ subunits.

Its subcellular location is the cytoplasm. The enzyme catalyses 1-(5-phospho-beta-D-ribosyl)-ATP + diphosphate = 5-phospho-alpha-D-ribose 1-diphosphate + ATP. It participates in amino-acid biosynthesis; L-histidine biosynthesis; L-histidine from 5-phospho-alpha-D-ribose 1-diphosphate: step 1/9. Functionally, catalyzes the condensation of ATP and 5-phosphoribose 1-diphosphate to form N'-(5'-phosphoribosyl)-ATP (PR-ATP). Has a crucial role in the pathway because the rate of histidine biosynthesis seems to be controlled primarily by regulation of HisG enzymatic activity. The chain is ATP phosphoribosyltransferase from Bacillus pumilus (strain SAFR-032).